Here is a 454-residue protein sequence, read N- to C-terminus: Adenosylmethionine-8-amino-7-oxononanoate aminotransferase (454 aa).

A pyridoxal 5'-phosphate-binding site is contributed by 119 to 120 (GA). Tyr152 contacts substrate. Residue Asp257 participates in pyridoxal 5'-phosphate binding. Substrate is bound by residues Lys286, Gly321, and Arg416. Lys286 carries the N6-(pyridoxal phosphate)lysine modification.

Belongs to the class-III pyridoxal-phosphate-dependent aminotransferase family. BioA subfamily. In terms of assembly, homodimer. The cofactor is pyridoxal 5'-phosphate.

The protein resides in the cytoplasm. It carries out the reaction (8S)-8-amino-7-oxononanoate + S-adenosyl-L-methionine = S-adenosyl-4-methylsulfanyl-2-oxobutanoate + (7R,8S)-7,8-diammoniononanoate. It functions in the pathway cofactor biosynthesis; biotin biosynthesis; 7,8-diaminononanoate from 8-amino-7-oxononanoate (SAM route): step 1/1. Catalyzes the transfer of the alpha-amino group from S-adenosyl-L-methionine (SAM) to 7-keto-8-aminopelargonic acid (KAPA) to form 7,8-diaminopelargonic acid (DAPA). It is the only aminotransferase known to utilize SAM as an amino donor. The chain is Adenosylmethionine-8-amino-7-oxononanoate aminotransferase from Anoxybacillus flavithermus (strain DSM 21510 / WK1).